The chain runs to 592 residues: BRCA1-associated protein (592 aa).

At Ser-52 the chain carries Phosphoserine. A disordered region spans residues 78-124 (KSNPDELKTTVEERKSSEASPTAQRSKDHSKECINAAPDSPSKQLPD). Over residues 80–94 (NPDELKTTVEERKSS) the composition is skewed to basic and acidic residues. A phosphoserine mark is found at Ser-97, Ser-117, and Ser-119. An RING-type zinc finger spans residues 264–304 (CTVCLERMDESVNGILTTLCNHSFHSQCLQRWDDTTCPVCR). The UBP-type; degenerate zinc finger occupies 301–393 (PVCRYCQTPE…GKIVQYECEG (93 aa)). Residues Cys-317, Cys-320, Cys-329, Cys-332, Cys-337, His-344, His-348, and His-354 each contribute to the Zn(2+) site. A coiled-coil region spans residues 429 to 537 (RIEKDTAEEI…EIQEQLRDVM (109 aa)). Residues 565–592 (AMASASSPASSGGSGKLPSRKGRSKRGK) form a disordered region. Residues 582–592 (PSRKGRSKRGK) are compositionally biased toward basic residues.

In terms of assembly, interacts with the nuclear localization signal of BRCA1 and with the N-terminal of KSR1. The C-terminal portion of BCRA1 interacts with DDB1. In terms of tissue distribution, expressed in breast epithelial cell lines.

It localises to the cytoplasm. The enzyme catalyses S-ubiquitinyl-[E2 ubiquitin-conjugating enzyme]-L-cysteine + [acceptor protein]-L-lysine = [E2 ubiquitin-conjugating enzyme]-L-cysteine + N(6)-ubiquitinyl-[acceptor protein]-L-lysine.. It participates in protein modification; protein ubiquitination. Its function is as follows. Negatively regulates MAP kinase activation by limiting the formation of Raf/MEK complexes probably by inactivation of the KSR1 scaffold protein. Also acts as a Ras responsive E3 ubiquitin ligase that, on activation of Ras, is modified by auto-polyubiquitination resulting in the release of inhibition of Raf/MEK complex formation. May also act as a cytoplasmic retention protein with a role in regulating nuclear transport. The polypeptide is BRCA1-associated protein (Homo sapiens (Human)).